The following is a 554-amino-acid chain: Serine/threonine-protein kinase ROP18 (554 aa).

A helical transmembrane segment spans residues 17–40 (GLATLLPKTACLAGLNVALVFLLF). In terms of domain architecture, Protein kinase spans 252 to 531 (LVRGAPLGSG…PLQALETAAF (280 aa)). Positions 262, 264, and 281 each coordinate ATP. An N-linked (GlcNAc...) asparagine glycan is attached at Asn-306. ATP-binding residues include Met-357, Ala-359, and Asp-362. Asn-377 carries N-linked (GlcNAc...) asparagine glycosylation. Asp-409 (proton acceptor) is an active-site residue. Asp-427 lines the ATP pocket. Mg(2+) is bound at residue Asp-427. The N-linked (GlcNAc...) asparagine glycan is linked to Asn-434. A disulfide bridge connects residues Cys-478 and Cys-497.

Belongs to the protein kinase superfamily. Ser/Thr protein kinase family. In terms of assembly, component of a complex at least composed of ROP18, GRA7 and ROP2. Component of a complex at least composed of ROP18 and ROP5. Interacts with GRA7 in the absence of ROP5. Interacts with mouse IRGB6 (TGTP1/TGTP2).

The protein resides in the parasitophorous vacuole membrane. It is found in the cytoplasmic vesicle. It localises to the secretory vesicle. Its subcellular location is the rhoptry. The enzyme catalyses L-threonyl-[protein] + ATP = O-phospho-L-threonyl-[protein] + ADP + H(+). It catalyses the reaction L-seryl-[protein] + ATP = O-phospho-L-seryl-[protein] + ADP + H(+). Its activity is regulated as follows. Kinase activity is enhanced by polymorphic pseudokinase ROP5. In terms of biological role, protein kinase. Virulence factor. Mediates parasite survival in mouse macrophages and monocytes. Reduces the accumulation of mouse IRGA6 (IIGP1) and IRGB6 (TGTP1/TGTP2), immunity-related GTPases (IRGs) that protect mice from infection by certain intracellular pathogens, on the parasitophorous vacuole and IRG-mediated killing of parasites by mouse cells; probably in connection with ROP5. In complex with GRA7, targets IRGs to prevent IRG-mediated parasite killing by mouse cells. Phosphorylates mouse IRGA6 (IIGP1); its activity toward mouse IRGA6 is promoted by GRA7 or ROP5. Phosphorylates mouse IRGB6 (TGTP1/TGTP2). Phosphorylates mouse IRGB10 (GM12250). Does not affect IFN-gamma (IFNG)-mediated parasite killing in human cells that do not possess the large variety of IRGs. This Toxoplasma gondii protein is Serine/threonine-protein kinase ROP18.